We begin with the raw amino-acid sequence, 173 residues long: Mitochondrial holo-[acyl-carrier-protein] synthase (173 aa).

Belongs to the P-Pant transferase superfamily. AcpS family.

Its subcellular location is the mitochondrion. It carries out the reaction apo-[ACP] + CoA = holo-[ACP] + adenosine 3',5'-bisphosphate + H(+). Functionally, transfers the 4'-phosphopantetheine moiety from coenzyme A to a Ser of mitochondrial acyl-carrier-protein. The sequence is that of Mitochondrial holo-[acyl-carrier-protein] synthase (PPT2) from Saccharomyces cerevisiae (strain ATCC 204508 / S288c) (Baker's yeast).